The primary structure comprises 272 residues: PHD finger protein ALFIN-LIKE 6 (272 aa).

A compositionally biased stretch (gly residues) spans 1–23; the sequence is MEGGGGGGGGGGGGGGGGGGGGA. 2 disordered regions span residues 1–24 and 162–218; these read MEGGGGGGGGGGGGGGGGGGGGAP and QAKE…DNTL. The segment covering 168–182 has biased composition (low complexity); the sequence is PNSSSKSNKPSSKVQ. The span at 183–200 shows a compositional bias: basic and acidic residues; sequence SKAESRSKSKLSAPKDEE. The span at 201-214 shows a compositional bias: acidic residues; sequence GSGDDEGEEEEDDH. Residues 216 to 268 form a PHD-type zinc finger; that stretch reads NTLCGTCGTNDGKDEFWICCDNCEKWYHGKCVKITPARAEHIKQYKCPDCTNK.

This sequence belongs to the Alfin family.

It localises to the nucleus. Functionally, histone-binding component that specifically recognizes H3 tails trimethylated on 'Lys-4' (H3K4me3), which mark transcription start sites of virtually all active genes. This chain is PHD finger protein ALFIN-LIKE 6, found in Oryza sativa subsp. indica (Rice).